A 263-amino-acid chain; its full sequence is MVQSTVTVNGVKVASTHPQSAHISIHIHQKSALEQLLGAVGSLKKFLSWPQARIHYGQLSLGVTQILLGLVSCALGVCLYFGPWTELCAFGCAFWSGSVAILAGVGTIVHEKRQGKLSGQVSCLLLLACIATAAAATVLGVNSLIRQTSVPYYVEIFSTCNPLQSSMDPGYGTVRYSDDSDWKTERCREYLNMMMNLFLAFCIMLTVVCILEIVVSVASLGLSLRSMYGRSSQALNEEESERKLLDGHPAPASPAKEKIPAIL.

4 helical membrane-spanning segments follow: residues 61–81 (LGVTQILLGLVSCALGVCLYF), 89–109 (AFGCAFWSGSVAILAGVGTIV), 121–141 (VSCLLLLACIATAAAATVLGV), and 197–217 (LFLAFCIMLTVVCILEIVVSV). Phosphoserine is present on residues Ser-231, Ser-240, and Ser-253. The segment at 239–263 (ESERKLLDGHPAPASPAKEKIPAIL) is disordered.

This sequence belongs to the TMEM176 family. Ubiquitously expressed with higher expression in lung, liver, kidney and colon. Expressed in cerebellar granule cells.

It is found in the nucleus membrane. Functionally, may play a role in the process of maturation of dendritic cells. Required for the development of cerebellar granule cells. The sequence is that of Transmembrane protein 176B (Tmem176b) from Mus musculus (Mouse).